Consider the following 534-residue polypeptide: Envelope glycoprotein (534 aa).

The N-terminal stretch at 1 to 34 (MEGPTHPKPSKDKTFSWDLMILVGVLLRLDVGMA) is a signal peptide. Topologically, residues 35 to 534 (NPSPHQIYNV…SLTSLSEVVL (500 aa)) are extracellular. N-linked (GlcNAc...) asparagine; by host glycans are attached at residues Asn43 and Asn58. Disulfide bonds link Cys115/Cys132 and Cys124/Cys137. Residues 245 to 279 (AMGPNLVLPDQKPPSRQSQIESRVTPHHSQGNGGT) are disordered. Residues 258-274 (PSRQSQIESRVTPHHSQ) are compositionally biased toward polar residues. N-linked (GlcNAc...) asparagine; by host glycans are attached at residues Asn286, Asn322, and Asn327. The short motif at 332-335 (CWLC) is the CXXC element. N-linked (GlcNAc...) asparagine; by host glycans are attached at residues Asn351, Asn354, and Asn430. Residues 468-488 (ISLTVALMLGGLTVGGIAAGV) are fusion peptide. Residues 496-534 (LETAQFRQLQMAMHTDIQALEESISALEKSLTSLSEVVL) adopt a coiled-coil conformation.

In terms of assembly, the mature envelope protein (Env) consists of a trimer of SU-TM heterodimers attached by noncovalent interactions or by a labile interchain disulfide bond. Post-translationally, specific enzymatic cleavages in vivo yield mature proteins. Envelope glycoproteins are synthesized as an inactive precursor that is N-glycosylated and processed likely by host cell furin or by a furin-like protease in the Golgi to yield the mature SU and TM proteins. The cleavage site between SU and TM requires the minimal sequence [KR]-X-[KR]-R.

The protein resides in the virion membrane. It is found in the host cell membrane. Its function is as follows. The surface protein (SU) attaches the virus to the host cell by binding to its receptor. This interaction triggers the refolding of the transmembrane protein (TM) and is thought to activate its fusogenic potential by unmasking its fusion peptide. Fusion occurs at the host cell plasma membrane. In terms of biological role, the transmembrane protein (TM) acts as a class I viral fusion protein. Under the current model, the protein has at least 3 conformational states: pre-fusion native state, pre-hairpin intermediate state, and post-fusion hairpin state. During viral and target cell membrane fusion, the coiled coil regions (heptad repeats) assume a trimer-of-hairpins structure, positioning the fusion peptide in close proximity to the C-terminal region of the ectodomain. The formation of this structure appears to drive apposition and subsequent fusion of viral and target cell membranes. Membranes fusion leads to delivery of the nucleocapsid into the cytoplasm. This Feline sarcoma virus (strain Snyder-Theilen) protein is Envelope glycoprotein (env).